The following is a 601-amino-acid chain: Aspartate--tRNA(Asp/Asn) ligase (601 aa).

Glu177 serves as a coordination point for L-aspartate. The aspartate stretch occupies residues 201 to 204 (QLFK). Arg223 lines the L-aspartate pocket. Residues 223–225 (RDE) and Gln232 each bind ATP. His455 provides a ligand contact to L-aspartate. Glu489 contacts ATP. Arg496 lines the L-aspartate pocket. An ATP-binding site is contributed by 541-544 (GWDR). A disordered region spans residues 568-601 (VDPLTDAPAPIPLEQRRETGVDFKPKKKTDESAV). The segment covering 581–601 (EQRRETGVDFKPKKKTDESAV) has biased composition (basic and acidic residues).

It belongs to the class-II aminoacyl-tRNA synthetase family. Type 1 subfamily. As to quaternary structure, homodimer.

Its subcellular location is the cytoplasm. It carries out the reaction tRNA(Asx) + L-aspartate + ATP = L-aspartyl-tRNA(Asx) + AMP + diphosphate. In terms of biological role, aspartyl-tRNA synthetase with relaxed tRNA specificity since it is able to aspartylate not only its cognate tRNA(Asp) but also tRNA(Asn). Reaction proceeds in two steps: L-aspartate is first activated by ATP to form Asp-AMP and then transferred to the acceptor end of tRNA(Asp/Asn). The protein is Aspartate--tRNA(Asp/Asn) ligase of Corynebacterium diphtheriae (strain ATCC 700971 / NCTC 13129 / Biotype gravis).